Here is a 103-residue protein sequence, read N- to C-terminus: MYAVIKTGGKQYKVAAGEKIKVEQIAAEVGQEIVIDQVLALGSGADLKIGTPLVEGATVTATVLAQGRHDKVRIFKMRRRKHYQKRQGHRQNFTELQISAVLG.

It belongs to the bacterial ribosomal protein bL21 family. As to quaternary structure, part of the 50S ribosomal subunit. Contacts protein L20.

Its function is as follows. This protein binds to 23S rRNA in the presence of protein L20. In Leptothrix cholodnii (strain ATCC 51168 / LMG 8142 / SP-6) (Leptothrix discophora (strain SP-6)), this protein is Large ribosomal subunit protein bL21.